Reading from the N-terminus, the 288-residue chain is Urease accessory protein UreD (288 aa).

The protein belongs to the UreD family. UreD, UreF and UreG form a complex that acts as a GTP-hydrolysis-dependent molecular chaperone, activating the urease apoprotein by helping to assemble the nickel containing metallocenter of UreC. The UreE protein probably delivers the nickel.

The protein localises to the cytoplasm. Its function is as follows. Required for maturation of urease via the functional incorporation of the urease nickel metallocenter. The chain is Urease accessory protein UreD from Dechloromonas aromatica (strain RCB).